We begin with the raw amino-acid sequence, 397 residues long: Succinyl-diaminopimelate desuccinylase (397 aa).

Position 73 (His-73) interacts with Zn(2+). Asp-75 is an active-site residue. Asp-106 serves as a coordination point for Zn(2+). The active-site Proton acceptor is the Glu-140. The Zn(2+) site is built by Glu-141, Glu-169, and His-366.

Belongs to the peptidase M20A family. DapE subfamily. As to quaternary structure, homodimer. Requires Zn(2+) as cofactor. Co(2+) is required as a cofactor.

The catalysed reaction is N-succinyl-(2S,6S)-2,6-diaminopimelate + H2O = (2S,6S)-2,6-diaminopimelate + succinate. It participates in amino-acid biosynthesis; L-lysine biosynthesis via DAP pathway; LL-2,6-diaminopimelate from (S)-tetrahydrodipicolinate (succinylase route): step 3/3. Its function is as follows. Catalyzes the hydrolysis of N-succinyl-L,L-diaminopimelic acid (SDAP), forming succinate and LL-2,6-diaminopimelate (DAP), an intermediate involved in the bacterial biosynthesis of lysine and meso-diaminopimelic acid, an essential component of bacterial cell walls. The chain is Succinyl-diaminopimelate desuccinylase from Rhizobium johnstonii (strain DSM 114642 / LMG 32736 / 3841) (Rhizobium leguminosarum bv. viciae).